The following is a 754-amino-acid chain: uncharacterized protein (754 aa).

The disordered stretch occupies residues 1-110 (MNKGQNQVVP…RNMLGSLQKT (110 aa)). A compositionally biased stretch (polar residues) spans 15-25 (FGGQNPPQLSS). The span at 26–35 (IPPIVNPVVV) shows a compositional bias: low complexity. Residues 36 to 46 (QNRTSPGTPFI) show a composition bias toward polar residues. Positions 49–60 (KAKEIYNRRQQE) are enriched in basic and acidic residues. The span at 62–72 (ISSDSEEEESP) shows a compositional bias: acidic residues. Positions 76–93 (AKSKYSRDSRDSRDTRDS) are enriched in basic and acidic residues.

The protein resides in the virion. This is an uncharacterized protein from Acanthamoeba polyphaga mimivirus (APMV).